Consider the following 399-residue polypeptide: MDSKGRNVIVCDNGTGFVKCGYAGSNFPTHIFPSMVGRPMIRAVNKIGDIEVKDLHVDDLMVGDEASQLRSLLEVSYPMENGVVRNWDDMCHVWDYTFGPKKMDIDPTNTKILLTEPPMNPTKNREKMIEVMFEKYGFDSAYIAIQAVLTLYAQGLISGVVIDSGDGVTHICPVYEEFALPHLTRRLDIAGRDITRYLIKLLLLRGYAFNHSADFETVRIMKEKLCYIGYDIEMEQRLALETTVLVESYTLPDGRVIKVGGERFEAPEALFQPHLINVEGPGIAELAFNTIQAADIDIRPELYKHIVLSGGSTMYPGLPSRLEREIKQLYLERVLKNDTEKLAKFKIRIEDPPRRKDMVFIGGAVLAEVTKDRDGFWMSKQEYQEQGLKVLQKLQKISH.

ATP-binding positions include 165 to 167 (GDG), 219 to 223 (RIMKE), and 310 to 315 (GGSTMY).

It belongs to the actin family. ARP2 subfamily. In terms of assembly, component of the Arp2/3 complex.

It is found in the cytoplasm. The protein resides in the cytoskeleton. In terms of biological role, functions as ATP-binding component of the Arp2/3 complex which is involved in regulation of actin polymerization and together with an activating nucleation-promoting factor (NPF) mediates the formation of branched actin networks. Seems to contact the pointed end of the daughter actin filament. The chain is Actin-related protein 2 (Arp2) from Drosophila melanogaster (Fruit fly).